Here is a 59-residue protein sequence, read N- to C-terminus: Potassium channel toxin alpha-KTx 15.4 (59 aa).

The N-terminal stretch at 1–22 is a signal peptide; that stretch reads MKFSSIILLTLLICSMSIFGNC. At Gln-23 the chain carries Pyrrolidone carboxylic acid. Disulfide bonds link Cys-30/Cys-50, Cys-35/Cys-55, and Cys-39/Cys-57.

As to expression, expressed by the venom gland.

The protein resides in the secreted. Functionally, blocker of A-type voltage-gated potassium channels of cerebellar granular cells. May also inhibit Kv4/KCND when coexpressed with DPP6 or DPP10. The occlusion of the outer entry of the K(+) conducting pore is partially reversible and affects both open and closed channels. It shares the same target in rat brain than BmTX3 (AC Q8I0L5) and AmmTX3 (AC P60208). The chain is Potassium channel toxin alpha-KTx 15.4 from Androctonus australis (Sahara scorpion).